Here is a 433-residue protein sequence, read N- to C-terminus: Small ribosomal subunit biogenesis GTPase RsgA 1, mitochondrial (433 aa).

The segment at 1–20 (MLRAKHIGKNYSSSLSPVLS) is disordered. Residues 113-291 (SEILDPPVAN…LADTPGFNQP (179 aa)) enclose the CP-type G domain. Residue 212-220 (GPSGVGKSS) participates in GTP binding. Residues Cys-317, Cys-322, His-324, and Cys-330 each coordinate Zn(2+).

This sequence belongs to the TRAFAC class YlqF/YawG GTPase family. RsgA subfamily. As to quaternary structure, monomer. Associates with 30S ribosomal subunit, binds 16S rRNA. Requires Zn(2+) as cofactor.

The protein resides in the mitochondrion. In terms of biological role, one of several proteins that assist in the late maturation steps of the functional core of the 30S ribosomal subunit. Helps release RbfA from mature subunits. May play a role in the assembly of ribosomal proteins into the subunit. Circularly permuted GTPase that catalyzes slow GTP hydrolysis, GTPase activity is stimulated by the 30S ribosomal subunit. Required for embryo development. The chain is Small ribosomal subunit biogenesis GTPase RsgA 1, mitochondrial from Arabidopsis thaliana (Mouse-ear cress).